The primary structure comprises 79 residues: Crassicorin-I (79 aa).

Residues 1–19 form the signal peptide; it reads MKLFLVSIVLVGMLVLAAA. Residues 20 to 39 constitute a propeptide that is removed on maturation; that stretch reads RPERDIDSFDEQEEKGFVKR. Intrachain disulfides connect C43–C76, C45–C69, and C59–C77.

Belongs to the sea anemone type 3 (BDS) potassium channel toxin family. Highly expressed by the mesenteries. Moderately expressed by the pharynx. Weakly expressed by the gonad and pedal disk. No expression in tentacle.

The protein resides in the secreted. Its subcellular location is the nematocyst. Its function is as follows. Peptide with both antimicrobial and neurotoxin activities. Cationic AMP with antibacterial activity against both Gram-positive bacteria (B.subtilis, MIC=11.49 ug/mL) and Gram-negative bacteria (E.coli (MIC=12.21 ug/mL) and S.enterica (MIC=11.95 ug/mL)). Shows no significant antimicrobial activity against bacteria S.aureus and P.aeruginosa, as well as the fungus C.albicans. In vivo, induces reversible paralytic activity towards the shrimp P.paucidens. May act by impairing sodium or potassium channels in the prey. This is Crassicorin-I from Urticina crassicornis (Mottled anemone).